A 517-amino-acid chain; its full sequence is Retrotransposon-like protein 1 (517 aa).

2 disordered regions span residues 1 to 29 and 142 to 161; these read MEVN…QQQL and EEER…DARS.

The polypeptide is Retrotransposon-like protein 1 (retr-1) (Caenorhabditis elegans).